The sequence spans 227 residues: Enolase-phosphatase E1 (227 aa).

The protein belongs to the HAD-like hydrolase superfamily. MasA/MtnC family. Monomer. Mg(2+) serves as cofactor.

It carries out the reaction 5-methylsulfanyl-2,3-dioxopentyl phosphate + H2O = 1,2-dihydroxy-5-(methylsulfanyl)pent-1-en-3-one + phosphate. It functions in the pathway amino-acid biosynthesis; L-methionine biosynthesis via salvage pathway; L-methionine from S-methyl-5-thio-alpha-D-ribose 1-phosphate: step 3/6. It participates in amino-acid biosynthesis; L-methionine biosynthesis via salvage pathway; L-methionine from S-methyl-5-thio-alpha-D-ribose 1-phosphate: step 4/6. Its function is as follows. Bifunctional enzyme that catalyzes the enolization of 2,3-diketo-5-methylthiopentyl-1-phosphate (DK-MTP-1-P) into the intermediate 2-hydroxy-3-keto-5-methylthiopentenyl-1-phosphate (HK-MTPenyl-1-P), which is then dephosphorylated to form the acireductone 1,2-dihydroxy-3-keto-5-methylthiopentene (DHK-MTPene). In Pseudomonas savastanoi pv. phaseolicola (strain 1448A / Race 6) (Pseudomonas syringae pv. phaseolicola (strain 1448A / Race 6)), this protein is Enolase-phosphatase E1.